We begin with the raw amino-acid sequence, 392 residues long: INCREASED PETAL GROWTH ANISOTROPY 1-like protein 1 (392 aa).

Residues 11–52 (LLRLVKELQAYLVRNDKLEKENHELRQEVARLRAQVSNLKSH) are a coiled coil. Polar residues-rich tracts occupy residues 65–76 (QSSYDGSNTDGS) and 100–109 (PTIQGQSTAT). Positions 65–128 (QSSYDGSNTD…SKRTLGKRSV (64 aa)) are disordered. A coiled-coil region spans residues 269–299 (KDSLTQALQRIQSLQDRLEESVNNTEKMRDS).

It belongs to the IPGA1 family.

Its subcellular location is the cytoplasm. It is found in the cytoskeleton. Functionally, microtubule-associated protein probably involved in the regulation of microtubule organization. The protein is INCREASED PETAL GROWTH ANISOTROPY 1-like protein 1 of Arabidopsis thaliana (Mouse-ear cress).